The primary structure comprises 319 residues: Protein StrN (319 aa).

Its pathway is antibiotic biosynthesis; streptomycin biosynthesis. The chain is Protein StrN (strN) from Streptomyces griseus.